Reading from the N-terminus, the 406-residue chain is Cysteine desulfurase (406 aa).

N6-(pyridoxal phosphate)lysine is present on Lys-226. Cys-364 (cysteine persulfide intermediate) is an active-site residue.

It belongs to the class-V pyridoxal-phosphate-dependent aminotransferase family. Csd subfamily. As to quaternary structure, homodimer. Interacts with SufE and the SufBCD complex composed of SufB, SufC and SufD. The interaction with SufE is required to mediate the direct transfer of the sulfur atom from the S-sulfanylcysteine. The cofactor is pyridoxal 5'-phosphate.

Its subcellular location is the cytoplasm. The catalysed reaction is (sulfur carrier)-H + L-cysteine = (sulfur carrier)-SH + L-alanine. The enzyme catalyses L-selenocysteine + AH2 = hydrogenselenide + L-alanine + A + H(+). Its pathway is cofactor biosynthesis; iron-sulfur cluster biosynthesis. Its function is as follows. Cysteine desulfurases mobilize the sulfur from L-cysteine to yield L-alanine, an essential step in sulfur metabolism for biosynthesis of a variety of sulfur-containing biomolecules. Component of the suf operon, which is activated and required under specific conditions such as oxidative stress and iron limitation. Acts as a potent selenocysteine lyase in vitro, that mobilizes selenium from L-selenocysteine. Selenocysteine lyase activity is however unsure in vivo. The protein is Cysteine desulfurase of Escherichia coli O139:H28 (strain E24377A / ETEC).